Consider the following 336-residue polypeptide: MAESVFSCIPEDVVFNIFFKLQDDPRNWARLACVCTKFSSIVRNVCCKTQCYSAIPTVISDLLPLPPSAAASASSSTAADSSLTPPGGWASLYKLAVCCPGLFHAGILLENSDFGLERELGPDQNLDPKPTTTDLALNDEEVSKPVGSGLETTSFWSLYDDLYTDTIPAPPPEDSIDDQEEEIETSEIRPGRDLPVRKRRKICRSLGSHLASGGWNLSREQGNKLLASRFRGDCLYICNWPGCIHVEEKRNYMLFRGVFKDFKRSRVWRTINDGNRSKTSGLKCAFCLCDETWDLHSSFCLRRVFGFHDDGEPVVRAYVCENGHVSGAWTALPLYT.

The region spanning 3–55 is the F-box domain; that stretch reads ESVFSCIPEDVVFNIFFKLQDDPRNWARLACVCTKFSSIVRNVCCKTQCYSAI. The short motif at 197 to 201 is the Nuclear localization signal element; that stretch reads RKRRK.

As to quaternary structure, probable component of an E3 ubiquitin ligase SCF complex. Interacts with SKP1A/ASK1 and SKP1B/ASK2.

It is found in the nucleus. It functions in the pathway protein modification; protein ubiquitination. Functionally, component of SCF(ASK-cullin-F-box) E3 ubiquitin ligase complexes, which may mediate the ubiquitination and subsequent proteasomal degradation of target proteins. Negative regulator of the phyA signaling pathway that shifts the responsiveness of the phyA signaling system associated with hypocotyl elongation from red to far-red wavelength. The chain is Phytochrome A-associated F-box protein (EID1) from Arabidopsis thaliana (Mouse-ear cress).